Consider the following 522-residue polypeptide: Serine/threonine-protein kinase BSK1-2 (522 aa).

The disordered stretch occupies residues 1–54 (MGCCGSSLRVGSHAPEKPPRRARPPPPPPQPHHPRRPSFTLNAHQAAASSSAAS). A lipid anchor (N-myristoyl glycine) is attached at Gly2. Residues 79–338 (ANIVSESGEK…KLVSILQPLQ (260 aa)) enclose the Protein kinase domain. ATP contacts are provided by residues 85-93 (SGEKAPNLV) and Lys111. The active-site Proton acceptor is the Asp205.

This sequence belongs to the protein kinase superfamily. Ser/Thr protein kinase family.

Its subcellular location is the cell membrane. It carries out the reaction L-seryl-[protein] + ATP = O-phospho-L-seryl-[protein] + ADP + H(+). The catalysed reaction is L-threonyl-[protein] + ATP = O-phospho-L-threonyl-[protein] + ADP + H(+). Probable serine/threonine kinase that functions as a positive regulator of plant immunity. May be involved in the regulation of pattern-triggered immunity (PTI). Does not seem to be involved in responses to brassinosteroid (BR) signaling. This Oryza sativa subsp. japonica (Rice) protein is Serine/threonine-protein kinase BSK1-2.